We begin with the raw amino-acid sequence, 153 residues long: ATP synthase subunit a (153 aa).

2 helical membrane-spanning segments follow: residues 43-63 (AFHLDTLGWSVALGLIFLLIF) and 104-124 (IAPLALTIFVWVFLMNAVDLI).

The protein belongs to the ATPase A chain family. F-type ATPases have 2 components, CF(1) - the catalytic core - and CF(0) - the membrane proton channel. CF(1) has five subunits: alpha(3), beta(3), gamma(1), delta(1), epsilon(1). CF(0) has three main subunits: a(1), b(2) and c(9-12). The alpha and beta chains form an alternating ring which encloses part of the gamma chain. CF(1) is attached to CF(0) by a central stalk formed by the gamma and epsilon chains, while a peripheral stalk is formed by the delta and b chains.

The protein localises to the cell inner membrane. Key component of the proton channel; it plays a direct role in the translocation of protons across the membrane. The polypeptide is ATP synthase subunit a (atpB) (Pseudomonas putida (Arthrobacter siderocapsulatus)).